The chain runs to 258 residues: Pimeloyl-[acyl-carrier protein] methyl ester esterase (258 aa).

In terms of domain architecture, AB hydrolase-1 spans leucine 16–proline 242. Substrate-binding positions include tryptophan 22, serine 82 to leucine 83, and phenylalanine 143 to glutamine 147. Residue serine 82 is the Nucleophile of the active site. Catalysis depends on residues aspartate 207 and histidine 235. Residue histidine 235 participates in substrate binding.

This sequence belongs to the AB hydrolase superfamily. Carboxylesterase BioH family. In terms of assembly, monomer.

The protein resides in the cytoplasm. It catalyses the reaction 6-carboxyhexanoyl-[ACP] methyl ester + H2O = 6-carboxyhexanoyl-[ACP] + methanol + H(+). Its pathway is cofactor biosynthesis; biotin biosynthesis. The physiological role of BioH is to remove the methyl group introduced by BioC when the pimeloyl moiety is complete. It allows to synthesize pimeloyl-ACP via the fatty acid synthetic pathway through the hydrolysis of the ester bonds of pimeloyl-ACP esters. This chain is Pimeloyl-[acyl-carrier protein] methyl ester esterase, found in Edwardsiella ictaluri (strain 93-146).